We begin with the raw amino-acid sequence, 226 residues long: Brachyurin (226 aa).

The Peptidase S1 domain maps to 1-223 (IVGGVEAVPN…FLDWIQTQTG (223 aa)). A disulfide bridge connects residues C26 and C42. Catalysis depends on charge relay system residues H41 and D87. 2 disulfides stabilise this stretch: C151–C164 and C174–C200. Residue S178 is the Charge relay system of the active site.

Belongs to the peptidase S1 family.

The catalysed reaction is Hydrolysis of proteins, with broad specificity for peptide bonds. Native collagen is cleaved about 75% of the length of the molecule from the N-terminus. Low activity on small molecule substrates of both trypsin and chymotrypsin.. Its function is as follows. This enzyme is a serine protease capable of degrading the native triple helix of collagen. This chain is Brachyurin, found in Leptuca pugilator (Atlantic sand fiddler crab).